Here is a 144-residue protein sequence, read N- to C-terminus: Granulocyte-macrophage colony-stimulating factor (144 aa).

Positions 1-17 are cleaved as a signal peptide; that stretch reads MWLQSLLLLGTVACSIS. 3 O-linked (GalNAc...) serine glycosylation sites follow: serine 22, serine 24, and serine 26. Residue threonine 27 is glycosylated (O-linked (GalNAc...) threonine; partial). N-linked (GlcNAc...) asparagine glycosylation is found at asparagine 44 and asparagine 54. 2 cysteine pairs are disulfide-bonded: cysteine 71–cysteine 113 and cysteine 105–cysteine 138.

The protein belongs to the GM-CSF family. Monomer. The signaling GM-CSF receptor complex is a dodecamer of two head-to-head hexamers of two alpha, two beta, and two ligand subunits.

Its subcellular location is the secreted. In terms of biological role, cytokine that stimulates the growth and differentiation of hematopoietic precursor cells from various lineages, including granulocytes, macrophages, eosinophils and erythrocytes. This Homo sapiens (Human) protein is Granulocyte-macrophage colony-stimulating factor (CSF2).